A 2883-amino-acid chain; its full sequence is Desmoplakin (2883 aa).

Positions 1-21 (MSCNGGSHPRINTLGRMTRAE) are disordered. The tract at residues 1 to 596 (MSCNGGSHPR…DYMKTIEDLE (596 aa)) is interaction with PKP1, JUP, PKP2. The interval 1 to 1068 (MSCNGGSHPR…ANSENCNKNK (1068 aa)) is globular 1. Phosphoserine is present on S22. T59 carries the post-translational modification Phosphothreonine. A Phosphoserine modification is found at S65. Y68 is subject to Phosphotyrosine. T73 bears the Phosphothreonine mark. Residues S177, S178, and S188 each carry the phosphoserine modification. Spectrin repeat units follow at residues 190 to 283 (SGWD…HLRQ) and 284 to 387 (LQNI…LKEN). Residues 388–458 (AAYFQFFEEA…NLVNKSKKIV (71 aa)) form a Spectrin 3a repeat. In terms of domain architecture, SH3 spans 470-527 (NKPIILRALCDYKQDQKIVHKGDECILKDNNERSKWYVTGPGGVDMLVPSVGLIIPPP). The stretch at 528-557 (NPLAVDLSCKIEQYYEAILALWNQLYINMK) is one Spectrin 3b repeat. 3 Spectrin repeats span residues 558 to 639 (SLVS…IQLP), 666 to 781 (VIET…SLCS), and 782 to 895 (VRAL…DLEK). The stretch at 1034 to 1956 (KSLEDLKLKN…LQKEIEKLRQ (923 aa)) forms a coiled coil. The segment at 1069 to 1957 (FLDQNLQKYQ…QKEIEKLRQR (889 aa)) is central fibrous rod domain. 3 positions are modified to phosphoserine: S1670, S1720, and S2036. The tract at residues 1958–2882 (PYGSHRETQT…YSFSSSSIGG (925 aa)) is globular 2. Residues 1972–2220 (TVDSSKLVFD…LLLSVQKRSM (249 aa)) form a 4.5 X 38 AA tandem repeats (Domain A) region. 17 Plectin repeats span residues 2021-2057 (QPFL…PEST), 2058-2095 (VMLL…FDDR), 2096-2133 (QQIY…RETG), 2134-2171 (MRLL…RDLY), 2175-2209 (NDPR…PHTG), 2210-2245 (LLLL…PSTV), 2263-2300 (KDFL…PGTA), 2301-2338 (LELL…IEFK), 2339-2376 (EKLL…KGHG), 2377-2414 (IRLL…EELS), 2418-2452 (SDPS…EETG), 2468-2505 (SQKN…YDTF), 2519-2556 (TITG…RKFF), 2622-2659 (SDPL…SITG), 2660-2697 (QRLL…QDMA), 2736-2773 (QRFL…GRAA), and 2774-2811 (QRLQ…DITG). 3 positions are modified to phosphoserine: S2219, S2221, and S2237. Positions 2256-2458 (DEVGERIKDF…EETGLCLLPL (203 aa)) are 4.5 X 38 AA tandem repeats (Domain B). Q2492 carries Omega-hydroxyceramide glutamate ester lipidation. A 4.5 X 38 AA tandem repeats (Domain C) region spans residues 2621-2833 (LSDPLEESSP…GLPSPYNMSA (213 aa)). A phosphoserine mark is found at S2822 and S2827. The interval 2822–2883 (SKGLPSPYNM…SFSSSSIGGY (62 aa)) is disordered. Y2829 is modified (phosphotyrosine). Residues S2832 and S2836 each carry the phosphoserine modification. A 6 X 4 AA tandem repeats of G-S-R-[SR] region spans residues 2835–2858 (GSRSGSRSGSRSGSRSGSRSGSRR). The span at 2835–2858 (GSRSGSRSGSRSGSRSGSRSGSRR) shows a compositional bias: low complexity. Omega-N-methylarginine is present on residues R2837 and R2858. Phosphoserine is present on S2860. At T2864 the chain carries Phosphothreonine. The span at 2867-2883 (SSYSYSYSFSSSSIGGY) shows a compositional bias: low complexity. S2879 carries the phosphoserine modification.

The protein belongs to the plakin or cytolinker family. In terms of assembly, homodimer. Interacts with COL17A1 (via cytoplasmic region). Interacts with DSC2. Interacts with PKP1. Interacts with PKP2. Interacts weakly with TMEM65. In terms of processing, phosphorylation at Ser-2860 increases association with intermediate filament cytokeratin, potentially facilitating interaction between desmosome junctions and intermediate filament architecture. Expressed in undifferentiated keratinocytes of the epidermis at birth, expression increases as differentiation proceeds (at protein level). Abundantly expressed in the suprabasal layers and weakly in the basal layers of the outer hair root sheath (at protein level). Expressed at intercalated disks in cardiomyocytes (at protein level).

The protein resides in the cell junction. It is found in the desmosome. The protein localises to the cell membrane. It localises to the cytoplasm. Functionally, major high molecular weight protein of desmosomes. Regulates profibrotic gene expression in cardiomyocytes via activation of the MAPK14/p38 MAPK signaling cascade and increase in TGFB1 protein abundance. The protein is Desmoplakin of Mus musculus (Mouse).